The sequence spans 448 residues: MSKQLVSIIDVPKHIGEEITIGAWVANKSGKGKIAFLQLRDGTAFFQGVAFKPNFIEKFGEEEGLEKFDTIKHLSQETSIYVTGMVKEDERSKFGYELDINDIEVIGKSQDYPITPKEHGTDFLMDNRHLWLRSRKQMAIQQIRNAIIYATYDFFDKNGFIKFDSPILSSNAAEDSTELFETDYFGTPAFLSQSGQLYLEAGAMALGRVFDFGPVFRAEKSKTRRHLTEFWMMDAEYSFLSHDESLDLQEAYVKALIQGAIDRAPQALEILERDVDLLKKYIAEPFKRVSYDEAIDLLQAHENDEDTDYEHLEHGDDFGSPHETWISNYFGVPTFVVNYPASFKAFYMKPVPGNPERVLCADLLAPEGYGEIIGGSMREDDYDALVAKMEELGMDRSEYEFYLDLRKYGSVPHGGFGIGIERMVTFVAGTKHIREAIPFPRMLHRIKP.

Belongs to the class-II aminoacyl-tRNA synthetase family. Homodimer.

The protein localises to the cytoplasm. The catalysed reaction is tRNA(Asn) + L-asparagine + ATP = L-asparaginyl-tRNA(Asn) + AMP + diphosphate + H(+). The protein is Asparagine--tRNA ligase of Streptococcus thermophilus (strain CNRZ 1066).